Here is an 83-residue protein sequence, read N- to C-terminus: Hainantoxin-III 6 (83 aa).

An N-terminal signal peptide occupies residues 1-21 (MKASMFLALAGLVLLFVVGYA). Positions 22–48 (SESEEKESPRELLSKIFAVDDFKGEER) are excised as a propeptide. Intrachain disulfides connect Cys-50–Cys-65, Cys-57–Cys-70, and Cys-64–Cys-77. Leucine amide is present on Leu-81.

This sequence belongs to the neurotoxin 10 (Hwtx-1) family. 15 (Hntx-3) subfamily. In terms of assembly, monomer. Expressed by the venom gland.

The protein localises to the secreted. Selective antagonist of neuronal tetrodotoxin (TTX)-sensitive voltage-gated sodium channels (IC(50)=1270 nM on Nav1.1/SCN1A, 270 nM on Nav1.2/SCN2A, 491 nM on Nav1.3/SCN3A and 232 nM on Nav1.7/SCN9A). This toxin suppress Nav1.7 current amplitude without significantly altering the activation, inactivation, and repriming kinetics. Short extreme depolarizations partially activate the toxin-bound channel, indicating voltage-dependent inhibition of this toxin. This toxin increases the deactivation of the Nav1.7 current after extreme depolarizations. The toxin-Nav1.7 complex is gradually dissociated upon prolonged strong depolarizations in a voltage-dependent manner, and the unbound toxin rebinds to Nav1.7 after a long repolarization. Moreover, analysis of chimeric channels showed that the DIIS3-S4 linker is critical for toxin binding to Nav1.7. These data are consistent with this toxin interacting with Nav1.7 site 4 and trapping the domain II voltage sensor in the closed state. The sequence is that of Hainantoxin-III 6 from Cyriopagopus hainanus (Chinese bird spider).